A 38-amino-acid polypeptide reads, in one-letter code: Photosystem II reaction center protein L (38 aa).

The chain crosses the membrane as a helical span at residues 17-37; sequence SLFIGLLLVLVLALLFSSYFF.

This sequence belongs to the PsbL family. PSII is composed of 1 copy each of membrane proteins PsbA, PsbB, PsbC, PsbD, PsbE, PsbF, PsbH, PsbI, PsbJ, PsbK, PsbL, PsbM, PsbT, PsbX, PsbY, PsbZ, Psb30/Ycf12, peripheral proteins PsbO, CyanoQ (PsbQ), PsbU, PsbV and a large number of cofactors. It forms dimeric complexes.

Its subcellular location is the cellular thylakoid membrane. In terms of biological role, one of the components of the core complex of photosystem II (PSII). PSII is a light-driven water:plastoquinone oxidoreductase that uses light energy to abstract electrons from H(2)O, generating O(2) and a proton gradient subsequently used for ATP formation. It consists of a core antenna complex that captures photons, and an electron transfer chain that converts photonic excitation into a charge separation. This subunit is found at the monomer-monomer interface and is required for correct PSII assembly and/or dimerization. In Acaryochloris marina (strain MBIC 11017), this protein is Photosystem II reaction center protein L.